Here is a 216-residue protein sequence, read N- to C-terminus: Ribonuclease HII (216 aa).

An RNase H type-2 domain is found at 33-216 (WPVAGADEAG…RMSFRPFRQL (184 aa)). Positions 39, 40, and 130 each coordinate a divalent metal cation.

The protein belongs to the RNase HII family. Mn(2+) is required as a cofactor. It depends on Mg(2+) as a cofactor.

It is found in the cytoplasm. It catalyses the reaction Endonucleolytic cleavage to 5'-phosphomonoester.. In terms of biological role, endonuclease that specifically degrades the RNA of RNA-DNA hybrids. The polypeptide is Ribonuclease HII (Sinorhizobium medicae (strain WSM419) (Ensifer medicae)).